We begin with the raw amino-acid sequence, 936 residues long: Periplasmic nitrate reductase (936 aa).

Positions 1–31 (MALSRRDFLKSSAAAAAASAVGLSVPKEVEA) form a signal peptide, tat-type signal. Residues 40–96 (WRWDKAVCRFCGTGCGIMIATKDDRIVAVKGDPLAPVNRGLNCIKGYFTAKIMYGAD) enclose the 4Fe-4S Mo/W bis-MGD-type domain. Cys-47, Cys-50, Cys-54, and Cys-82 together coordinate [4Fe-4S] cluster. Mo-bis(molybdopterin guanine dinucleotide)-binding positions include Lys-84, Gln-152, Asn-177, Cys-181, 214–221 (WGSNMAEM), 246–250 (STYTH), Met-424, Gln-428, Asn-534, 559–560 (SD), Lys-582, Asp-609, and 826–835 (TGRVLEHWHS). A substrate-binding site is contributed by Trp-902. Residues Asn-910 and Lys-927 each coordinate Mo-bis(molybdopterin guanine dinucleotide).

Belongs to the prokaryotic molybdopterin-containing oxidoreductase family. NasA/NapA/NarB subfamily. In terms of assembly, component of the periplasmic nitrate reductase NapAB complex composed of NapA and NapB. The cofactor is [4Fe-4S] cluster. Mo-bis(molybdopterin guanine dinucleotide) serves as cofactor. In terms of processing, predicted to be exported by the Tat system. The position of the signal peptide cleavage has not been experimentally proven.

It localises to the periplasm. It catalyses the reaction 2 Fe(II)-[cytochrome] + nitrate + 2 H(+) = 2 Fe(III)-[cytochrome] + nitrite + H2O. Functionally, catalytic subunit of the periplasmic nitrate reductase complex NapAB. Receives electrons from NapB and catalyzes the reduction of nitrate to nitrite. In Nitratiruptor sp. (strain SB155-2), this protein is Periplasmic nitrate reductase.